The primary structure comprises 212 residues: Ribosomal RNA small subunit methyltransferase G (212 aa).

S-adenosyl-L-methionine contacts are provided by residues Gly80, Leu85, 131–132, and Arg146; that span reads AE.

Belongs to the methyltransferase superfamily. RNA methyltransferase RsmG family.

The protein resides in the cytoplasm. It carries out the reaction guanosine(527) in 16S rRNA + S-adenosyl-L-methionine = N(7)-methylguanosine(527) in 16S rRNA + S-adenosyl-L-homocysteine. In terms of biological role, specifically methylates the N7 position of guanine in position 527 of 16S rRNA. This chain is Ribosomal RNA small subunit methyltransferase G, found in Xanthomonas oryzae pv. oryzae (strain KACC10331 / KXO85).